The primary structure comprises 67 residues: MPKKLKIKLVKSPIGYPWDQKDTVKRLGLRRMNQVVIKDDCPQIRGMIRKVRHLVEVEEVEEGGNEA.

The protein belongs to the universal ribosomal protein uL30 family. Part of the 50S ribosomal subunit.

This is Large ribosomal subunit protein uL30 from Thermotoga neapolitana (strain ATCC 49049 / DSM 4359 / NBRC 107923 / NS-E).